A 293-amino-acid chain; its full sequence is Heterogeneous nuclear ribonucleoprotein C-like 1 (293 aa).

One can recognise an RRM domain in the interval 16 to 87 (SRVFIGNLNT…QVVDINLAAE (72 aa)). Disordered stretches follow at residues 137–177 (ALAV…KLKG) and 206–293 (KEQS…QDDS). Residues 177–225 (GDDLQAIKQELTQIKQKVDSLLENLEKIEKEQSKQEVEVKNAKSEEEQS) are a coiled coil. Composition is skewed to basic and acidic residues over residues 206–222 (KEQS…KSEE) and 229–240 (MKKDETHVKMES). Acidic residues-rich tracts occupy residues 242–267 (GGAE…DDQL) and 275–284 (KEAEEGEDDR).

This sequence belongs to the RRM HNRPC family. RALY subfamily.

The protein localises to the nucleus. In terms of biological role, may play a role in nucleosome assembly by neutralizing basic proteins such as A and B core hnRNPs. The polypeptide is Heterogeneous nuclear ribonucleoprotein C-like 1 (HNRNPCL1) (Homo sapiens (Human)).